The sequence spans 261 residues: 5'-nucleotidase SurE (261 aa).

Positions 8, 9, 39, and 94 each coordinate a divalent metal cation.

The protein belongs to the SurE nucleotidase family. It depends on a divalent metal cation as a cofactor.

Its subcellular location is the cytoplasm. It catalyses the reaction a ribonucleoside 5'-phosphate + H2O = a ribonucleoside + phosphate. Functionally, nucleotidase that shows phosphatase activity on nucleoside 5'-monophosphates. The protein is 5'-nucleotidase SurE of Archaeoglobus fulgidus (strain ATCC 49558 / DSM 4304 / JCM 9628 / NBRC 100126 / VC-16).